Here is a 554-residue protein sequence, read N- to C-terminus: Phosphomethylpyrimidine synthase (554 aa).

Substrate is bound by residues Asn191, Met220, Tyr249, His285, 305 to 307, 346 to 349, and Glu385; these read SRG and DGLR. His389 contributes to the Zn(2+) binding site. Position 412 (Tyr412) interacts with substrate. Position 453 (His453) interacts with Zn(2+). The [4Fe-4S] cluster site is built by Cys533, Cys536, and Cys541.

It belongs to the ThiC family. In terms of assembly, homodimer. The cofactor is [4Fe-4S] cluster.

The catalysed reaction is 5-amino-1-(5-phospho-beta-D-ribosyl)imidazole + S-adenosyl-L-methionine = 4-amino-2-methyl-5-(phosphooxymethyl)pyrimidine + CO + 5'-deoxyadenosine + formate + L-methionine + 3 H(+). Its pathway is cofactor biosynthesis; thiamine diphosphate biosynthesis. Its function is as follows. Catalyzes the synthesis of the hydroxymethylpyrimidine phosphate (HMP-P) moiety of thiamine from aminoimidazole ribotide (AIR) in a radical S-adenosyl-L-methionine (SAM)-dependent reaction. The chain is Phosphomethylpyrimidine synthase from Ehrlichia chaffeensis (strain ATCC CRL-10679 / Arkansas).